The following is a 130-amino-acid chain: MIGEWNYGTGRRKSSVARVFIKKGTGKIIVNGKTVEEYFGRQTSIMICKQPLFLTNNAEAFDIKVNVHGGGESGQAGAVRHGVTRALIDYDAALKPELSNAGFVTRDAREVERKKVGLHGARRRKQFSKR.

The protein belongs to the universal ribosomal protein uS9 family.

The polypeptide is Small ribosomal subunit protein uS9 (Leptothrix cholodnii (strain ATCC 51168 / LMG 8142 / SP-6) (Leptothrix discophora (strain SP-6))).